Reading from the N-terminus, the 268-residue chain is Tryptophan synthase alpha chain (268 aa).

Residues Glu-49 and Asp-60 each act as proton acceptor in the active site.

It belongs to the TrpA family. In terms of assembly, tetramer of two alpha and two beta chains.

It catalyses the reaction (1S,2R)-1-C-(indol-3-yl)glycerol 3-phosphate + L-serine = D-glyceraldehyde 3-phosphate + L-tryptophan + H2O. It functions in the pathway amino-acid biosynthesis; L-tryptophan biosynthesis; L-tryptophan from chorismate: step 5/5. The alpha subunit is responsible for the aldol cleavage of indoleglycerol phosphate to indole and glyceraldehyde 3-phosphate. This is Tryptophan synthase alpha chain from Pseudomonas paraeruginosa (strain DSM 24068 / PA7) (Pseudomonas aeruginosa (strain PA7)).